Here is an 80-residue protein sequence, read N- to C-terminus: Cell division protein ZapB (80 aa).

Positions 3 to 80 (FEVLEKLEAK…SLLGKMEDVE (78 aa)) form a coiled coil.

This sequence belongs to the ZapB family. Homodimer. The ends of the coiled-coil dimer bind to each other, forming polymers. Interacts with FtsZ.

The protein resides in the cytoplasm. Its function is as follows. Non-essential, abundant cell division factor that is required for proper Z-ring formation. It is recruited early to the divisome by direct interaction with FtsZ, stimulating Z-ring assembly and thereby promoting cell division earlier in the cell cycle. Its recruitment to the Z-ring requires functional FtsA or ZipA. The sequence is that of Cell division protein ZapB from Vibrio cholerae serotype O1 (strain ATCC 39541 / Classical Ogawa 395 / O395).